A 176-amino-acid polypeptide reads, in one-letter code: Co-chaperone protein HscB homolog (176 aa).

The J domain maps to 8-80 (DFFALFGLPV…LRRATYLLKL (73 aa)).

Belongs to the HscB family. Interacts with HscA and stimulates its ATPase activity.

Its function is as follows. Co-chaperone involved in the maturation of iron-sulfur cluster-containing proteins. Seems to help targeting proteins to be folded toward HscA. The protein is Co-chaperone protein HscB homolog of Cupriavidus taiwanensis (strain DSM 17343 / BCRC 17206 / CCUG 44338 / CIP 107171 / LMG 19424 / R1) (Ralstonia taiwanensis (strain LMG 19424)).